The chain runs to 882 residues: MTLPSDFPLEPPATNKDPHRDYRGLDRSKLTPMYQHYVEVKETYPNALLLYRVGDFFECFFQDAVIISRELELVLTSKEGGKGIGRVAMTGVPHHALERYSRLLVEKGYAVAICDQVEDSTEAAAEKRLVERAITKLLTPGTLTDEGMLNAKKNNFLAAVVITGENWGLAYSDISTGEFYTTQASDLTALSLELSRLQPSEILFPINAPDLNRILRPGEKSDHLPPCLPDSFCYSLRPQTIFTLTEAKNRLLITYKMRSLEGMGCEHLPLAIRAAGGLLEYIEDTQKANQVPLQPLKTYSISEFLILDGQTRRNLEITQTVRDGSFYGSLLWAIDRTCTAMGSRALRRWLLQPLLDSRGIRARQDTIQELKDNPALRQDIRQKLREIYDIERLSGRVGAGTANARDLLSLAASLVKLADLAALVASGNSPYLKALQQIPADLEKLGQQVIAHLVESPPLHLKEGGVIREGIDAQLDALRRDYQEVIDWFKNLETTEKERTGISNLKVSYNKTFGYYISLPRSKADFAPKDYVRKQTLVNEERYITTELKEKENIILTAVDELNKLEYEIFSDLRRQVAEFSPEIREVATKVAALDVLAALAEIAVYQGYCRPEIADGRLIDIKDGRHPVVEQSLGAGFFVPNSINLGNQEGLEYPDLIILTGPNASGKSCYLRQVGLIQLLAQTGSFVPAKSAKISICDRIFTRVGAVDDLATGQSTFMVEMNETANILNHATDRSLVLLDEIGRGTATFDGLSIAWSVAEYLATVLQSRTIFATHYHELNELASILENVANYQVTVKELPHEIVFLHQVRPGGADKSYGIEAGRLAGLPTSVIDRAMQVMGQIEKHSKIAIGLRQGIKKIKPVKSDNSPSLQQLDIFDDSK.

The disordered stretch occupies residues 1-22 (MTLPSDFPLEPPATNKDPHRDY). 662-669 (GPNASGKS) contacts ATP.

Belongs to the DNA mismatch repair MutS family.

In terms of biological role, this protein is involved in the repair of mismatches in DNA. It is possible that it carries out the mismatch recognition step. This protein has a weak ATPase activity. The protein is DNA mismatch repair protein MutS of Microcystis aeruginosa (strain NIES-843 / IAM M-2473).